Consider the following 545-residue polypeptide: Membrane protein insertase YidC (545 aa).

The next 4 membrane-spanning stretches (helical) occupy residues 350–370 (IIGNWGWAIVVLTIIVKAVLY), 424–444 (LPMLLQIPVFIGLYWALFASV), 461–481 (ADPYYILPIIMAATMFAQTYL), and 498–518 (PLVFSVMFFFFPAGLVLYWVV).

This sequence belongs to the OXA1/ALB3/YidC family. Type 1 subfamily. As to quaternary structure, interacts with the Sec translocase complex via SecD. Specifically interacts with transmembrane segments of nascent integral membrane proteins during membrane integration.

Its subcellular location is the cell inner membrane. Its function is as follows. Required for the insertion and/or proper folding and/or complex formation of integral membrane proteins into the membrane. Involved in integration of membrane proteins that insert both dependently and independently of the Sec translocase complex, as well as at least some lipoproteins. Aids folding of multispanning membrane proteins. The sequence is that of Membrane protein insertase YidC from Neisseria gonorrhoeae (strain ATCC 700825 / FA 1090).